The sequence spans 167 residues: Zymogen granule membrane protein 16 (167 aa).

The first 16 residues, 1 to 16 (MLTVALLALLCASASG), serve as a signal peptide directing secretion. In terms of domain architecture, Jacalin-type lectin spans 24–159 (SSYSGEYGGG…IDAIGLHWDV (136 aa)).

This sequence belongs to the jacalin lectin family. In terms of tissue distribution, highly expressed in liver. Detected at lower levels in colon, ileum and jejunum.

It localises to the secreted. Its subcellular location is the extracellular space. It is found in the extracellular matrix. The protein resides in the zymogen granule lumen. The protein localises to the golgi apparatus lumen. Functionally, may play a role in protein trafficking. May act as a linker molecule between the submembranous matrix on the luminal side of zymogen granule membrane (ZGM) and aggregated secretory proteins during granule formation in the TGN. The polypeptide is Zymogen granule membrane protein 16 (ZG16) (Homo sapiens (Human)).